Reading from the N-terminus, the 467-residue chain is Flagellar hook-associated protein 2 (467 aa).

Residues 411 to 439 (VNATLKSLTKQYLSVSNSIDETVARYKAQ) adopt a coiled-coil conformation.

This sequence belongs to the FliD family. In terms of assembly, homopentamer.

The protein resides in the secreted. The protein localises to the bacterial flagellum. In terms of biological role, required for the morphogenesis and for the elongation of the flagellar filament by facilitating polymerization of the flagellin monomers at the tip of growing filament. Forms a capping structure, which prevents flagellin subunits (transported through the central channel of the flagellum) from leaking out without polymerization at the distal end. This chain is Flagellar hook-associated protein 2 (fliD), found in Salmonella typhimurium (strain LT2 / SGSC1412 / ATCC 700720).